The following is a 196-amino-acid chain: Probable malonic semialdehyde reductase RutE (196 aa).

Belongs to the nitroreductase family. HadB/RutE subfamily. The cofactor is FMN.

It carries out the reaction 3-hydroxypropanoate + NADP(+) = 3-oxopropanoate + NADPH + H(+). Functionally, may reduce toxic product malonic semialdehyde to 3-hydroxypropionic acid, which is excreted. In Klebsiella pneumoniae subsp. pneumoniae (strain ATCC 700721 / MGH 78578), this protein is Probable malonic semialdehyde reductase RutE.